A 510-amino-acid chain; its full sequence is E3 ubiquitin-protein ligase TRIM7 (510 aa).

Residues 29-81 (CSICLEFFREPVSVECGHSFCRACIMRCWERPGAGTGTATRTLPCPLPCPQCR) form an RING-type zinc finger. Phosphoserine; by RPS6KA5 is present on Ser106. The segment at 124–165 (AAAARCSQHGEQLKLYCQDDGRAICVVCDRAREHRSHAVLPL) adopts a B box-type zinc-finger fold. Positions 129, 132, 151, and 157 each coordinate Zn(2+). A coiled-coil region spans residues 165–275 (LEEAVQEAKE…SGQIQETAQK (111 aa)). The B30.2/SPRY domain maps to 323–510 (LLKKFKEDLQ…STGTYLRIWP (188 aa)).

It belongs to the TRIM/RBCC family. Forms homodimers. Interacts with GNIP2. Interacts with GYG1. Interacts with RNF187 (via C-terminus). In terms of processing, phosphorylated at Ser-106 by RPS6KA5/MSK1, which stimulates the ubiquitin ligase activity. Auto-ubiquitinates via 'Lys-63'-linked polyubiquitination. Highly expressed in antigen-presenting cells.

The protein resides in the nucleus. It localises to the cytoplasm. Its subcellular location is the golgi apparatus. It carries out the reaction S-ubiquitinyl-[E2 ubiquitin-conjugating enzyme]-L-cysteine + [acceptor protein]-L-lysine = [E2 ubiquitin-conjugating enzyme]-L-cysteine + N(6)-ubiquitinyl-[acceptor protein]-L-lysine.. The protein operates within protein modification; protein ubiquitination. Functionally, E3 ubiquitin-protein ligase that have both tumor-promoting and tumor-suppressing activities and functions in several biological processes including innate immunity, regulation of ferroptosis as well as cell proliferation and migration. Acts as an antiviral effector against multiple viruses by targeting specific viral proteins for ubiquitination and degradation including norovirus NTPase protein. Mechanistically, recognizes the C-terminal glutamine-containing motif generated by viral proteases that process the polyproteins and trigger their ubiquitination and subsequent degradation. Mediates 'Lys-63'-linked polyubiquitination and stabilization of the JUN coactivator RNF187 in response to growth factor signaling via the MEK/ERK pathway, thereby regulating JUN transactivation and cellular proliferation. Promotes the TLR4-mediated signaling activation through its E3 ligase domain leading to production of pro-inflammatory cytokines and type I interferon. Also plays a negative role in the regulation of exogenous cytosolic DNA virus-triggered immune response. Mechanistically, enhances the 'Lys-48'-linked ubiquitination of STING1 leading to its proteasome-dependent degradation. Mediates the ubiquitination of the SIN3-HDAC chromatin remodeling complex component BRMS1. Modulates NCOA4-mediated ferritinophagy and ferroptosis in glioblastoma cells by ubiquitinating NCOA4, leading to its degradation. In Mus musculus (Mouse), this protein is E3 ubiquitin-protein ligase TRIM7 (Trim7).